Reading from the N-terminus, the 318-residue chain is Biotin synthase (318 aa).

The 221-residue stretch at 40–260 (DDIQKASLLS…VATARIIMPL (221 aa)) folds into the Radical SAM core domain. Positions 55, 59, and 62 each coordinate [4Fe-4S] cluster. The [2Fe-2S] cluster site is built by Cys-100, Cys-132, Cys-192, and Arg-264.

This sequence belongs to the radical SAM superfamily. Biotin synthase family. As to quaternary structure, homodimer. Requires [4Fe-4S] cluster as cofactor. It depends on [2Fe-2S] cluster as a cofactor.

It carries out the reaction (4R,5S)-dethiobiotin + (sulfur carrier)-SH + 2 reduced [2Fe-2S]-[ferredoxin] + 2 S-adenosyl-L-methionine = (sulfur carrier)-H + biotin + 2 5'-deoxyadenosine + 2 L-methionine + 2 oxidized [2Fe-2S]-[ferredoxin]. The protein operates within cofactor biosynthesis; biotin biosynthesis; biotin from 7,8-diaminononanoate: step 2/2. In terms of biological role, catalyzes the conversion of dethiobiotin (DTB) to biotin by the insertion of a sulfur atom into dethiobiotin via a radical-based mechanism. This chain is Biotin synthase, found in Ruegeria pomeroyi (strain ATCC 700808 / DSM 15171 / DSS-3) (Silicibacter pomeroyi).